Reading from the N-terminus, the 466-residue chain is Ribulose bisphosphate carboxylase large chain (466 aa).

K5 bears the N6,N6,N6-trimethyllysine mark. Residues N114 and T164 each coordinate substrate. The active-site Proton acceptor is the K166. K168 contacts substrate. The Mg(2+) site is built by K192, D194, and E195. K192 is modified (N6-carboxylysine). H285 acts as the Proton acceptor in catalysis. 3 residues coordinate substrate: R286, H318, and S370.

This sequence belongs to the RuBisCO large chain family. Type I subfamily. As to quaternary structure, heterohexadecamer of 8 large chains and 8 small chains; disulfide-linked. The disulfide link is formed within the large subunit homodimers. Mg(2+) is required as a cofactor. The disulfide bond which can form in the large chain dimeric partners within the hexadecamer appears to be associated with oxidative stress and protein turnover.

The protein localises to the plastid. Its subcellular location is the chloroplast. The catalysed reaction is 2 (2R)-3-phosphoglycerate + 2 H(+) = D-ribulose 1,5-bisphosphate + CO2 + H2O. It catalyses the reaction D-ribulose 1,5-bisphosphate + O2 = 2-phosphoglycolate + (2R)-3-phosphoglycerate + 2 H(+). RuBisCO catalyzes two reactions: the carboxylation of D-ribulose 1,5-bisphosphate, the primary event in carbon dioxide fixation, as well as the oxidative fragmentation of the pentose substrate in the photorespiration process. Both reactions occur simultaneously and in competition at the same active site. The protein is Ribulose bisphosphate carboxylase large chain of Drosera peltata (Pale sundew).